Reading from the N-terminus, the 258-residue chain is E3 ubiquitin ligase TRIM40 (258 aa).

An RING-type zinc finger spans residues 14 to 56; sequence CPICQESLKEAVSTNCGHLFCRVCLTQHVEKASASGVFCCPLC. The segment at 66–107 adopts a B box-type zinc-finger fold; the sequence is GTGYICPNHQKRVCRFCEESRLLLCVECLVSPEHMSHHELTI. Zn(2+) is bound by residues Cys-71, His-74, Cys-93, and His-99. The stretch at 107 to 159 forms a coiled coil; the sequence is IENALSHYKERLNRRSRKLRKDIAELQRLKAQQEKKLQALQFQVDHGNHRLEA.

Belongs to the TRIM/RBCC family. As to quaternary structure, interacts with NEDD8. In terms of tissue distribution, highly expressed in normal gastrointestinal epithelia but that is down-regulated in gastrointestinal carcinomas and chronic inflammatory lesions of the gastrointestinal tract.

It catalyses the reaction S-ubiquitinyl-[E2 ubiquitin-conjugating enzyme]-L-cysteine + [acceptor protein]-L-lysine = [E2 ubiquitin-conjugating enzyme]-L-cysteine + N(6)-ubiquitinyl-[acceptor protein]-L-lysine.. Functionally, E3 ubiquitin-protein ligase that plays a role in the limitation of the innate immune response. Mediates inhibition of the RLR signaling pathway by ubiquitinating RIGI and IFIH1 receptors, leading to their proteasomal degradation. Also promotes the neddylation of IKBKG/NEMO, stabilizing NFKBIA, and thereby inhibiting of NF-kappa-B nuclear translocation and activation. The sequence is that of E3 ubiquitin ligase TRIM40 (TRIM40) from Homo sapiens (Human).